The primary structure comprises 301 residues: Probable porphobilinogen deaminase (301 aa).

Cysteine 241 is subject to S-(dipyrrolylmethanemethyl)cysteine.

This sequence belongs to the HMBS family. Requires dipyrromethane as cofactor.

The catalysed reaction is 4 porphobilinogen + H2O = hydroxymethylbilane + 4 NH4(+). The protein operates within porphyrin-containing compound metabolism; protoporphyrin-IX biosynthesis; coproporphyrinogen-III from 5-aminolevulinate: step 2/4. Functionally, tetrapolymerization of the monopyrrole PBG into the hydroxymethylbilane pre-uroporphyrinogen in several discrete steps. This chain is Probable porphobilinogen deaminase, found in Pyrobaculum islandicum (strain DSM 4184 / JCM 9189 / GEO3).